We begin with the raw amino-acid sequence, 362 residues long: Glutaminyl-peptide cyclotransferase (362 aa).

A signal peptide spans 1 to 35 (MAGSEDKRVVGTLHLLLLQATVLSLTAGNLSLVSA). 2 N-linked (GlcNAc...) asparagine glycosylation sites follow: Asn29 and Asn50. The cysteines at positions 140 and 165 are disulfide-linked. Zn(2+) is bound at residue Asp160. Glu202 (proton acceptor) is an active-site residue. Residue Glu203 participates in Zn(2+) binding. The active-site Proton acceptor is Asp249. Residue His331 coordinates Zn(2+).

It belongs to the glutaminyl-peptide cyclotransferase family.

Its subcellular location is the secreted. The catalysed reaction is N-terminal L-glutaminyl-[peptide] = N-terminal 5-oxo-L-prolyl-[peptide] + NH4(+). In terms of biological role, responsible for the biosynthesis of pyroglutamyl peptides. Has a bias against acidic and tryptophan residues adjacent to the N-terminal glutaminyl residue and a lack of importance of chain length after the second residue. This Mus musculus (Mouse) protein is Glutaminyl-peptide cyclotransferase (Qpct).